Reading from the N-terminus, the 315-residue chain is MDLRQFLMCLSLCTAFALSKPTEKKDRVHHEPQLSDKVHNDAQSFDYDHDAFLGAEEAKTFDQLTPEESKERLGKIVSKIDGDKDGFVTVDELKDWIKFAQKRWIYEDVERQWKGHDLNEDGLVSWEEYKNATYGYVLDDPDPDDGFNYKQMMVRDERRFKMADKDGDLIATKEEFTAFLHPEEYDYMKDIVVQETMEDIDKNADGFIDLEEYIGDMYSHDGNTDEPEWVKTEREQFVEFRDKNRDGKMDKEETKDWILPSDYDHAEAEARHLVYESDQNKDGKLTKEEIVDKYDLFVGSQATDFGEALVRHDEF.

Positions 1–19 (MDLRQFLMCLSLCTAFALS) are cleaved as a signal peptide. Phosphoserine is present on Ser-44. Tyr-47 is modified (phosphotyrosine). Phosphothreonine is present on Thr-65. EF-hand domains are found at residues 68 to 103 (ESKE…AQKR), 104 to 139 (WIYE…YVLD), 151 to 186 (QMMV…EEYD), 188 to 223 (MKDI…HDGN), 229 to 264 (WVKT…SDYD), and 265 to 300 (HAEA…FVGS). A Phosphoserine; by FAM20C modification is found at Ser-69. Asp-81, Asp-83, Asp-85, Glu-92, Asp-117, Asn-119, Asp-121, and Glu-128 together coordinate Ca(2+). An N-linked (GlcNAc...) (complex) asparagine glycan is attached at Asn-131. Asp-164 is a Ca(2+) binding site. Position 165 is an N6-acetyllysine (Lys-165). 12 residues coordinate Ca(2+): Asp-166, Asp-168, Glu-175, Asp-201, Asn-203, Asp-205, Glu-212, Asp-242, Asn-244, Asp-246, Lys-248, and Glu-253. Phosphothreonine is present on Thr-254. 2 positions are modified to phosphoserine: Ser-261 and Ser-277. The Ca(2+) site is built by Asp-278, Asn-280, Asp-282, Lys-284, and Glu-289. A Prevents secretion from ER motif is present at residues 312–315 (HDEF).

It belongs to the CREC family. In terms of assembly, interacts with GGCX. As to expression, ubiquitously expressed. Expressed at high levels in heart, placenta and skeletal muscle, at lower levels in lung, kidney and pancreas and at very low levels in brain and liver.

Its subcellular location is the endoplasmic reticulum membrane. The protein resides in the golgi apparatus. The protein localises to the secreted. It localises to the melanosome. It is found in the sarcoplasmic reticulum lumen. Involved in regulation of vitamin K-dependent carboxylation of multiple N-terminal glutamate residues. Seems to inhibit gamma-carboxylase GGCX. Binds 7 calcium ions with a low affinity. The chain is Calumenin (CALU) from Homo sapiens (Human).